A 399-amino-acid chain; its full sequence is Probable peptidoglycan glycosyltransferase FtsW (399 aa).

At 1-25 (MTAAAPSKPLPRTPRVRQAYPLDYP) the chain is on the cytoplasmic side. A helical transmembrane segment spans residues 26 to 46 (LLLCALGLLAFGWVMVTSASM). Residues 47-64 (SIAEACCQNPFHYSIRHA) lie on the Periplasmic side of the membrane. The helical transmembrane segment at 65-85 (IALGLALMLGLMAYSVPSHWW) threads the bilayer. Over 86-88 (ERH) the chain is Cytoplasmic. Residues 89–109 (GVWLFLASALVLILVLIPGIG) form a helical membrane-spanning segment. Over 110-117 (RTVNGATR) the chain is Periplasmic. A helical transmembrane segment spans residues 118 to 138 (WIPLGPLNVQPSEFVKLFAIL). The Cytoplasmic portion of the chain corresponds to 139–153 (YVAGYLVRHADKVVN). A helical membrane pass occupies residues 154-174 (QLSGFIRPLILIGAAALLILM). The Periplasmic portion of the chain corresponds to 175–177 (QPD). Helical transmembrane passes span 178–198 (FGTT…GGAS) and 199–219 (LLPF…LVIF). Over 220-281 (SPYRLERVVS…PEAHTDFLPS (62 aa)) the chain is Periplasmic. Residues 282 to 302 (VIGEELGLAGMLVLIAAFVFL) traverse the membrane as a helical segment. The Cytoplasmic portion of the chain corresponds to 303–326 (SWRAMSIGVRAEALKRPFESYVAQ). Residues 327 to 347 (GIGLWIGLQSFVNLGVNVGIL) traverse the membrane as a helical segment. Topologically, residues 348 to 353 (PTKGLT) are periplasmic. The helical transmembrane segment at 354-374 (LPFMSYGSNSLMVGCMAVAIL) threads the bilayer. At 375 to 399 (LRIDVMLRRVESEAKFKRGTPWSRA) the chain is on the cytoplasmic side.

It belongs to the SEDS family. FtsW subfamily.

The protein resides in the cell inner membrane. It carries out the reaction [GlcNAc-(1-&gt;4)-Mur2Ac(oyl-L-Ala-gamma-D-Glu-L-Lys-D-Ala-D-Ala)](n)-di-trans,octa-cis-undecaprenyl diphosphate + beta-D-GlcNAc-(1-&gt;4)-Mur2Ac(oyl-L-Ala-gamma-D-Glu-L-Lys-D-Ala-D-Ala)-di-trans,octa-cis-undecaprenyl diphosphate = [GlcNAc-(1-&gt;4)-Mur2Ac(oyl-L-Ala-gamma-D-Glu-L-Lys-D-Ala-D-Ala)](n+1)-di-trans,octa-cis-undecaprenyl diphosphate + di-trans,octa-cis-undecaprenyl diphosphate + H(+). It participates in cell wall biogenesis; peptidoglycan biosynthesis. Peptidoglycan polymerase that is essential for cell division. The sequence is that of Probable peptidoglycan glycosyltransferase FtsW from Allochromatium vinosum (strain ATCC 17899 / DSM 180 / NBRC 103801 / NCIMB 10441 / D) (Chromatium vinosum).